The following is a 90-amino-acid chain: DNA-binding protein HU-alpha (90 aa).

It belongs to the bacterial histone-like protein family. In terms of assembly, heterodimer of an alpha and a beta chain.

In terms of biological role, histone-like DNA-binding protein which is capable of wrapping DNA to stabilize it, and thus to prevent its denaturation under extreme environmental conditions. In Escherichia coli O157:H7, this protein is DNA-binding protein HU-alpha (hupA).